We begin with the raw amino-acid sequence, 398 residues long: 1-deoxy-D-xylulose 5-phosphate reductoisomerase (398 aa).

The NADPH site is built by Thr-11, Gly-12, Ser-13, Ile-14, Arg-38, Asn-39, and Asn-125. Lys-126 provides a ligand contact to 1-deoxy-D-xylulose 5-phosphate. Glu-127 lines the NADPH pocket. Asp-151 serves as a coordination point for Mn(2+). Residues Ser-152, Glu-153, Ser-179, and His-202 each coordinate 1-deoxy-D-xylulose 5-phosphate. Glu-153 is a Mn(2+) binding site. Residue Gly-208 coordinates NADPH. The 1-deoxy-D-xylulose 5-phosphate site is built by Ser-215, Asn-220, Lys-221, and Glu-224. A Mn(2+)-binding site is contributed by Glu-224.

This sequence belongs to the DXR family. The cofactor is Mg(2+). Mn(2+) is required as a cofactor.

The catalysed reaction is 2-C-methyl-D-erythritol 4-phosphate + NADP(+) = 1-deoxy-D-xylulose 5-phosphate + NADPH + H(+). It participates in isoprenoid biosynthesis; isopentenyl diphosphate biosynthesis via DXP pathway; isopentenyl diphosphate from 1-deoxy-D-xylulose 5-phosphate: step 1/6. Its function is as follows. Catalyzes the NADPH-dependent rearrangement and reduction of 1-deoxy-D-xylulose-5-phosphate (DXP) to 2-C-methyl-D-erythritol 4-phosphate (MEP). In Burkholderia pseudomallei (strain 1106a), this protein is 1-deoxy-D-xylulose 5-phosphate reductoisomerase.